The primary structure comprises 59 residues: Large ribosomal subunit protein bL32 (59 aa).

Over residues 1-20 the composition is skewed to basic residues; the sequence is MAVPKKKTSKGKRNQRHATW. The segment at 1 to 22 is disordered; sequence MAVPKKKTSKGKRNQRHATWKG.

It belongs to the bacterial ribosomal protein bL32 family.

In Prochlorococcus marinus (strain NATL1A), this protein is Large ribosomal subunit protein bL32.